We begin with the raw amino-acid sequence, 2752 residues long: Piezo-type mechanosensitive ion channel component 2 (2752 aa).

The Cytoplasmic portion of the chain corresponds to 1–12 (MASEVVCGLIFR). The chain crosses the membrane as a helical span at residues 13–24 (LLLPICLAVACA). Over 25–30 (FRYNGL) the chain is Extracellular. A helical membrane pass occupies residues 31–43 (SFVYLIYLLLIPL). Residues 44-50 (FSEPTKT) lie on the Cytoplasmic side of the membrane. Residues 51–76 (TMQGHTGRLLKSLCFISLSFLLLHII) traverse the membrane as a helical segment. Topologically, residues 77 to 122 (FHITLVSLEAQHRIAPGYNCSTWEKTFRQIGFESLKGADAGNGIRV) are extracellular. N-linked (GlcNAc...) asparagine glycosylation occurs at N95. A helical membrane pass occupies residues 123-141 (FVPDIGMFIASLTIWLLCR). Residues 142–221 (NIVQKPVTDE…KEFIGNMITT (80 aa)) are Cytoplasmic-facing. A helical transmembrane segment spans residues 222 to 237 (AGKVVVTILLGSSGMM). Residues 238–240 (LPS) are Extracellular-facing. The chain crosses the membrane as a helical span at residues 241–258 (LTSSVYFFVFLGLCTWWS). Over 259 to 264 (WCRTFD) the chain is Cytoplasmic. A helical transmembrane segment spans residues 265 to 287 (PLLFSCLCVLLAIFTAGHLIGLY). Residues 288–335 (LYQFQFFQEAVPPNDYYARLFGIKSVIQTDCSSTWKIIVNPDLSWYHH) are Extracellular-facing. A helical transmembrane segment spans residues 336 to 355 (ANPILLLVMYYTLATLIRIW). Over 356–492 (LQEPLVQDEG…SIKVHAMVSV (137 aa)) the chain is Cytoplasmic. A disordered region spans residues 446-478 (STPQYRWEPSDESSEKREEEEEEKEEFEEERSR). Positions 463 to 474 (EEEEEEKEEFEE) are enriched in acidic residues. The chain crosses the membrane as a helical span at residues 493 to 514 (FQFIMKQSYICALIAMMAWSIT). The Extracellular portion of the chain corresponds to 515–519 (YHSWL). Residues 520-531 (TFVLLIWSCTLW) form a helical membrane-spanning segment. Over 532–535 (MIRN) the chain is Cytoplasmic. A helical transmembrane segment spans residues 536 to 562 (RRKYAMISSPFMVVYGNLLLILQYIWS). At 563–583 (FELPEIKKVPGFLEKKEPGEL) the chain is on the extracellular side. Residues 584-614 (ASKILFTITFWLLLRQHLTEQKALQEKEALL) form a helical membrane-spanning segment. Residues 615-685 (SEVKIGSQEN…GNLVVAMFIK (71 aa)) are Cytoplasmic-facing. Over residues 623–632 (ENEEKDEELQ) the composition is skewed to acidic residues. The segment at 623–664 (ENEEKDEELQDIQVEGEPKEEEEEEAKEEKQERKKVEQEEAE) is disordered. Over residues 649–660 (KEEKQERKKVEQ) the composition is skewed to basic and acidic residues. A helical transmembrane segment spans residues 686–699 (YWIYVCGGMFFFVS). The Extracellular segment spans residues 700–705 (FEGKIV). Residues 706–724 (MYKIIYMVLFLFCVALYQV) form a helical membrane-spanning segment. The Cytoplasmic portion of the chain corresponds to 725 to 733 (HYEWWRKIL). Residues 734-753 (KYFWMSVVIYTMLVLIFIYT) form a helical membrane-spanning segment. The Extracellular segment spans residues 754–785 (YQFENFPGLWQNMTGLKKEKLEDLGLKQFTVA). Residues 786–807 (ELFTRIFIPTSFLLVCILHLHY) traverse the membrane as a helical segment. Topologically, residues 808–940 (FHDRFLELTD…QVFMWWILEL (133 aa)) are cytoplasmic. S838 carries the post-translational modification Phosphoserine. The span at 862-883 (PGEEKLEGYSEKAQKGDLGKDS) shows a compositional bias: basic and acidic residues. The segment at 862-902 (PGEEKLEGYSEKAQKGDLGKDSEESEEDGEEEEESEEEEET) is disordered. Positions 884–902 (EESEEDGEEEEESEEEEET) are enriched in acidic residues. The helical transmembrane segment at 941 to 956 (HIIKIVSSYIIWVSVK) threads the bilayer. Residues 957–962 (EVSLFN) are Extracellular-facing. The helical transmembrane segment at 963-972 (YVFLISWAFA) threads the bilayer. Over 973–980 (LPYAKLRR) the chain is Cytoplasmic. Residues 981–1001 (LASSVCTVWTCVIIVCKMLYQ) traverse the membrane as a helical segment. At 1002-1057 (LQTIKPENFSVNCSLPNENQTNIPFNELNKSLLYSAPIDPTEWVGLRKSSPLLVYL) the chain is on the extracellular side. N1013 carries N-linked (GlcNAc...) asparagine glycosylation. A disulfide bond links C1014 and C1192. The chain crosses the membrane as a helical span at residues 1058-1082 (RNNLLMLAILAFEVTIYRHQEYYRG). At 1083–1123 (RNNLTAPVSRTIFHDITRLHLDDGLINCAKYFINYFFYKFG) the chain is on the cytoplasmic side. The chain crosses the membrane as a helical span at residues 1124-1138 (LETCFLMSVNVIGQR). The Extracellular segment spans residues 1139–1140 (MD). Residues 1141–1154 (FYAMIHACWLIAVL) form a helical membrane-spanning segment. Residues 1155–1165 (YRRRRKAIAEI) are Cytoplasmic-facing. The chain crosses the membrane as a helical span at residues 1166-1185 (WPKYCCFLACIITFQYFICI). At 1186 to 1222 (GIPPAPCRDYPWRFKGASFNDNIIKWLYFPDFIVRPN) the chain is on the extracellular side. A helical transmembrane segment spans residues 1223 to 1243 (PVFLVYDFMLLLCASLQRQIF). The Cytoplasmic portion of the chain corresponds to 1244–1297 (EDENKAAVRIMAGDNVEICMNLDAASFSQHNPVPDFIHCRSYLDMSKVIIFSYL). Residues 1298–1310 (FWFVLTIIFITGT) form a helical membrane-spanning segment. At 1311 to 1316 (TRISIF) the chain is on the extracellular side. The chain crosses the membrane as a helical span at residues 1317 to 1329 (CMGYLVACFYFLL). The Cytoplasmic portion of the chain corresponds to 1330–1338 (FGGDLLLKP). Residues 1339 to 1364 (IKSILRYWDWLIAYNVFVITMKNILS) form a helical membrane-spanning segment. At 1365 to 1413 (IGACGYIGTLVHNSCWLIQAFSLACTVKGYQMPAANSPCTLPSGEAGII) the chain is on the extracellular side. Residues 1414-1430 (WDSICFAFLLLQRRVFM) traverse the membrane as a helical segment. The Cytoplasmic segment spans residues 1431–1921 (SYYFLHVVAD…YAMYNTLVAR (491 aa)). A coiled-coil region spans residues 1458–1529 (TIVKAVKARI…EREADKQKAK (72 aa)). 3 disordered regions span residues 1488-1534 (QQKY…KKKQ), 1593-1636 (ALRQ…KKSD), and 1844-1868 (SQDD…KLGS). The span at 1594-1615 (LRQRHKEKKRSAREERKRRRKG) shows a compositional bias: basic residues. A helical transmembrane segment spans residues 1922 to 1936 (SEMVCYFVIILNHMV). Topologically, residues 1937-1943 (SASMITL) are extracellular. A helical transmembrane segment spans residues 1944–1955 (LLPILIFLWAML). Residues 1956–1961 (SVPRPS) are Cytoplasmic-facing. A helical transmembrane segment spans residues 1962–1983 (RRFWMMAIVYTEVAIVVKYFFQ). Residues 1984–2016 (FGFFPWNKNVEVNKDKPYHPPNIIGVEKKEGYV) are Extracellular-facing. Residues 2017-2035 (LYDLIQLLALFFHRSILKC) traverse the membrane as a helical segment. The Cytoplasmic segment spans residues 2036 to 2189 (HGLWDEDDMT…HPEYSAVTDV (154 aa)). Disordered stretches follow at residues 2047 to 2069 (SGMA…DSSD) and 2090 to 2135 (QQTA…SVLS). A compositionally biased stretch (low complexity) spans 2100-2127 (GSSSEPSQRSSFSSNRSQRGSTSTRNSS). Residues 2190–2209 (YVLMFLADTVDFIIIVFGFW) traverse the membrane as a helical segment. The Extracellular portion of the chain corresponds to 2210–2231 (AFGKHSAAADITSSLSEDQVPG). Residues 2232 to 2252 (PFLVMVLIQFGTMVVDRALYL) traverse the membrane as a helical segment. Residues 2253-2256 (RKTV) are Cytoplasmic-facing. The chain crosses the membrane as a helical span at residues 2257 to 2280 (LGKVIFQVILVFGIHFWMFFILPG). At 2281-2289 (VTERKFSQN) the chain is on the extracellular side. Residues 2290 to 2312 (LVAQLWYFVKCVYFGLSAYQIRC) traverse the membrane as a helical segment. Topologically, residues 2313-2397 (GYPTRVLGNF…YPQPRGQKKK (85 aa)) are cytoplasmic. A helical transmembrane segment spans residues 2398 to 2421 (KVVKYGMGGMIIVLLICIVWFPLL). Residues 2422–2669 (FMSLIKSVAG…PSLGFLAGYG (248 aa)) lie on the Extracellular side of the membrane. Residues 2670 to 2690 (IMGLYASVVLVIGKFVREFFS) traverse the membrane as a helical segment. Residues 2691-2752 (GISHSIMFEE…MIKWTREKTN (62 aa)) are Cytoplasmic-facing.

It belongs to the PIEZO (TC 1.A.75) family. In terms of assembly, homotrimer; the homotrimer forms a propeller-shaped Piezo channel with a cation-ion conducting pore. Heterotrimeric interaction may occur between PIEZO1 and PIEZO2. Interacts with STOML3. Interacts with TMC7; the interaction inhibits PIEZO2-conducted mechanically activated currents. Interacts with TMC1; the interaction may be part of the MET complex. Interacts with MDFIC (via C-terminus); the interaction prolongs Piezo channel inactivation. Interacts with MDFI (via C-terminus); the interaction prolongs Piezo channel inactivation.

The protein resides in the cell membrane. The enzyme catalyses Ca(2+)(in) = Ca(2+)(out). With respect to regulation, regulated by auxillary subunits MDFIC and MDFI. Channel activity is inhibited by TMEM120A. Phosphatidic acid and lysophosphatidic acid inhibit PIEZO2 channel activity. Pore-forming subunit of the mechanosensitive non-specific cation Piezo channel required for rapidly adapting mechanically activated (MA) currents and has a key role in sensing touch and tactile pain. Piezo channels are homotrimeric three-blade propeller-shaped structures that utilize a cap-motion and plug-and-latch mechanism to gate their ion-conducting pathways. Expressed in sensory neurons, is essential for diverse physiological processes, including respiratory control, systemic metabolism, urinary function, and proprioception. Mediates airway stretch sensing, enabling efficient respiration at birth and maintaining normal breathing in adults. It regulates brown and beige adipose tissue morphology and function, preventing systemic hypermetabolism. In the lower urinary tract, acts as a sensor in both the bladder urothelium and innervating sensory neurons being required for bladder-stretch sensing and urethral micturition reflexes, ensuring proper urinary function. Additionally, PIEZO2 serves as the principal mechanotransducer in proprioceptors, facilitating proprioception and coordinated body movements. In inner ear hair cells, PIEZO1/2 subunits may constitute part of the mechanotransducer (MET) non-selective cation channel complex where they may act as pore-forming ion-conducting component in the complex. Required for Merkel-cell mechanotransduction. Plays a major role in light-touch mechanosensation. This is Piezo-type mechanosensitive ion channel component 2 from Homo sapiens (Human).